Reading from the N-terminus, the 1786-residue chain is Laminin subunit beta-1 (1786 aa).

The N-terminal stretch at Met-1–Ala-21 is a signal peptide. The Laminin N-terminal domain maps to Ala-31 to Asn-270. Residue Asn-120 is glycosylated (N-linked (GlcNAc...) asparagine). Ser-250 carries the phosphoserine modification. Cystine bridges form between Cys-271–Cys-280, Cys-273–Cys-298, Cys-300–Cys-309, Cys-312–Cys-332, Cys-335–Cys-344, Cys-337–Cys-362, Cys-365–Cys-374, Cys-377–Cys-395, Cys-398–Cys-411, Cys-400–Cys-426, Cys-428–Cys-437, Cys-440–Cys-455, Cys-458–Cys-472, Cys-460–Cys-479, Cys-481–Cys-490, Cys-493–Cys-507, Cys-510–Cys-522, Cys-512–Cys-529, and Cys-531–Cys-540. 4 consecutive Laminin EGF-like domains span residues Cys-271–Lys-334, Cys-335–Pro-397, Cys-398–Ser-457, and Cys-458–Pro-509. Asn-356 is a glycosylation site (N-linked (GlcNAc...) asparagine). The Laminin EGF-like 5; truncated domain maps to Cys-510–Cys-540. N-linked (GlcNAc...) asparagine glycosylation occurs at Asn-519. The Laminin IV type B domain occupies Phe-549 to His-767. The N-linked (GlcNAc...) asparagine glycan is linked to Asn-677. Intrachain disulfides connect Cys-773/Cys-785, Cys-775/Cys-792, Cys-794/Cys-803, Cys-806/Cys-818, Cys-821/Cys-833, Cys-823/Cys-840, Cys-842/Cys-851, Cys-854/Cys-864, Cys-867/Cys-876, Cys-869/Cys-883, Cys-886/Cys-895, Cys-898/Cys-914, Cys-917/Cys-933, Cys-919/Cys-944, Cys-946/Cys-955, Cys-958/Cys-973, Cys-976/Cys-990, Cys-978/Cys-997, Cys-1000/Cys-1009, Cys-1012/Cys-1025, Cys-1028/Cys-1040, Cys-1030/Cys-1054, Cys-1056/Cys-1065, Cys-1068/Cys-1081, Cys-1084/Cys-1096, Cys-1086/Cys-1103, Cys-1105/Cys-1114, Cys-1117/Cys-1129, Cys-1132/Cys-1144, Cys-1134/Cys-1151, Cys-1153/Cys-1162, and Cys-1165/Cys-1176. 8 consecutive Laminin EGF-like domains span residues Cys-773–Pro-820, Cys-821–Pro-866, Cys-867–Pro-916, Cys-917–Pro-975, Cys-976–Lys-1027, Cys-1028–Pro-1083, Cys-1084–Ala-1131, and Cys-1132–Pro-1178. Asn-1041 carries an N-linked (GlcNAc...) asparagine glycan. The interval Cys-1179–Thr-1397 is domain II. N-linked (GlcNAc...) asparagine glycosylation is found at Asn-1195, Asn-1279, Asn-1336, and Asn-1343. Residues Tyr-1216–Gln-1315 adopt a coiled-coil conformation. Positions Lys-1368–Leu-1388 form a coiled coil. Positions Cys-1398 to Cys-1430 are domain alpha. Residues Gly-1431–Leu-1786 are domain I. Positions Asp-1448 to Lys-1778 form a coiled coil. N-linked (GlcNAc...) asparagine glycosylation is present at Asn-1487. At Ser-1496 the chain carries Phosphoserine. Asn-1542 and Asn-1643 each carry an N-linked (GlcNAc...) asparagine glycan. Ser-1666 bears the Phosphoserine mark.

In terms of assembly, laminin is a complex glycoprotein, consisting of three different polypeptide chains (alpha, beta, gamma), which are bound to each other by disulfide bonds into a cross-shaped molecule comprising one long and three short arms with globules at each end. Beta-1 is a subunit of laminin-1 (laminin-111 or EHS laminin), laminin-2 (laminin-211 or merosin), laminin-6 (laminin-311 or K-laminin), laminin-8 (laminin-411), laminin-10 (laminin-511) and laminin-12 (laminin-213). Interacts with ITGB1. Widely expressed in the embryo. High levels are detected in the cerebellar basement membrane, at postnatal day 7.

It localises to the secreted. Its subcellular location is the extracellular space. The protein resides in the extracellular matrix. The protein localises to the basement membrane. In terms of biological role, binding to cells via a high affinity receptor, laminin is thought to mediate the attachment, migration and organization of cells into tissues during embryonic development by interacting with other extracellular matrix components. Involved in the organization of the laminar architecture of the cerebral cortex. It is probably required for the integrity of the basement membrane/glia limitans that serves as an anchor point for the endfeet of radial glial cells and as a physical barrier to migrating neurons. Radial glial cells play a central role in cerebral cortical development, where they act both as the proliferative unit of the cerebral cortex and a scaffold for neurons migrating toward the pial surface. The sequence is that of Laminin subunit beta-1 (Lamb1) from Mus musculus (Mouse).